The sequence spans 153 residues: Large ribosomal subunit protein uL22 (153 aa).

This sequence belongs to the universal ribosomal protein uL22 family. Part of the 50S ribosomal subunit.

Functionally, this protein binds specifically to 23S rRNA. It makes multiple contacts with different domains of the 23S rRNA in the assembled 50S subunit and ribosome. In terms of biological role, the globular domain of the protein is located near the polypeptide exit tunnel on the outside of the subunit, while an extended beta-hairpin is found that lines the wall of the exit tunnel in the center of the 70S ribosome. This chain is Large ribosomal subunit protein uL22, found in Methanococcus maripaludis (strain C5 / ATCC BAA-1333).